The chain runs to 513 residues: Putative ATP-dependent RNA helicase QP509L (513 aa).

Residues 110–262 (KKLLSPYGRF…KIIIHHLGQP (153 aa)) enclose the Helicase ATP-binding domain. An ATP-binding site is contributed by 123-130 (LNTGLGKT). The DEAH box signature appears at 215-218 (DEAH).

This sequence belongs to the DEAD box helicase family. DEAH subfamily.

It catalyses the reaction ATP + H2O = ADP + phosphate + H(+). In Ornithodoros (relapsing fever ticks), this protein is Putative ATP-dependent RNA helicase QP509L.